The primary structure comprises 321 residues: L-lactate dehydrogenase (321 aa).

NAD(+) is bound by residues V19, D40, K45, Y71, and 85 to 86 (GA). Substrate-binding positions include Q88, R94, and 126-129 (NPVD). Residues 124–126 (ATN) and S149 contribute to the NAD(+) site. 154–157 (DTAR) contacts substrate. Beta-D-fructose 1,6-bisphosphate-binding residues include R159 and H174. H181 acts as the Proton acceptor in catalysis. Position 226 is a phosphotyrosine (Y226). Residue T235 participates in substrate binding.

This sequence belongs to the LDH/MDH superfamily. LDH family. In terms of assembly, homotetramer.

It is found in the cytoplasm. It catalyses the reaction (S)-lactate + NAD(+) = pyruvate + NADH + H(+). It functions in the pathway fermentation; pyruvate fermentation to lactate; (S)-lactate from pyruvate: step 1/1. With respect to regulation, allosterically activated by fructose 1,6-bisphosphate (FBP). Functionally, catalyzes the conversion of lactate to pyruvate. This is L-lactate dehydrogenase from Oceanobacillus iheyensis (strain DSM 14371 / CIP 107618 / JCM 11309 / KCTC 3954 / HTE831).